The sequence spans 336 residues: Glyceraldehyde-3-phosphate dehydrogenase (336 aa).

NAD(+) is bound by residues 12 to 13 (RI), aspartate 34, arginine 78, and threonine 121. Residues 151-153 (SCT), threonine 182, arginine 199, 212-213 (TG), and arginine 235 each bind D-glyceraldehyde 3-phosphate. The active-site Nucleophile is cysteine 152. NAD(+) is bound at residue asparagine 316.

The protein belongs to the glyceraldehyde-3-phosphate dehydrogenase family. As to quaternary structure, homotetramer.

It is found in the cytoplasm. It catalyses the reaction D-glyceraldehyde 3-phosphate + phosphate + NAD(+) = (2R)-3-phospho-glyceroyl phosphate + NADH + H(+). The protein operates within carbohydrate degradation; glycolysis; pyruvate from D-glyceraldehyde 3-phosphate: step 1/5. In terms of biological role, catalyzes the oxidative phosphorylation of glyceraldehyde 3-phosphate (G3P) to 1,3-bisphosphoglycerate (BPG) using the cofactor NAD. The first reaction step involves the formation of a hemiacetal intermediate between G3P and a cysteine residue, and this hemiacetal intermediate is then oxidized to a thioester, with concomitant reduction of NAD to NADH. The reduced NADH is then exchanged with the second NAD, and the thioester is attacked by a nucleophilic inorganic phosphate to produce BPG. This is Glyceraldehyde-3-phosphate dehydrogenase (gap) from Streptococcus dysgalactiae subsp. equisimilis (Streptococcus equisimilis).